A 287-amino-acid polypeptide reads, in one-letter code: Oxaloacetate decarboxylase (287 aa).

Ser-50 is a substrate binding site. Asp-88 lines the Mg(2+) pocket. Arg-159 and His-235 together coordinate substrate.

Belongs to the isocitrate lyase/PEP mutase superfamily. Oxaloacetate decarboxylase family. In terms of assembly, homotetramer; dimer of dimers. Mg(2+) is required as a cofactor.

The catalysed reaction is oxaloacetate + H(+) = pyruvate + CO2. Its function is as follows. Catalyzes the decarboxylation of oxaloacetate into pyruvate. Seems to play a role in maintaining cellular concentrations of bicarbonate and pyruvate. The chain is Oxaloacetate decarboxylase from Marinomonas sp. (strain MWYL1).